The chain runs to 475 residues: NAD-dependent histone deacetylase sir2 (475 aa).

The segment covering 1-12 (MASNPLDNNMPT) has biased composition (polar residues). The segment at 1 to 35 (MASNPLDNNMPTTPVEEKIPVASYSPSSSGSSSGA) is disordered. Residues 20 to 35 (PVASYSPSSSGSSSGA) show a composition bias toward low complexity. Serine 55 is modified (phosphoserine). The Deacetylase sirtuin-type domain occupies 139–436 (KLPHFNTFED…AGWLNELQAL (298 aa)). Residues 164-183 (GAGISTSLGILDFRSDNGFY) and 246-249 (QNID) contribute to the NAD(+) site. Residue histidine 266 is the Proton acceptor of the active site. Positions 274, 277, 298, and 301 each coordinate Zn(2+). NAD(+)-binding positions include 373–375 (GTS), 398–400 (SRT), and cysteine 416.

Belongs to the sirtuin family. Class I subfamily. It depends on Zn(2+) as a cofactor.

The protein localises to the nucleus. Its subcellular location is the chromosome. The protein resides in the centromere. It is found in the telomere. It catalyses the reaction N(6)-acetyl-L-lysyl-[protein] + NAD(+) + H2O = 2''-O-acetyl-ADP-D-ribose + nicotinamide + L-lysyl-[protein]. Functionally, involved in silencing within the mating-type region, at the telomeres, and according to PubMed:12867036 also within centromeric DNA regions. Required for the localization of swi6 to the telomeres, silent mating type region, and according to PubMed:12867036 to the centromeric DNA regions. According to PubMed:15545655 not required for the localization of swi6 to centromeric foci. Deacetylates histone H3 on 'Lys-9' and 'Lys-16' of histone H4. This has a direct role in heterochromatin assembly. The protein is NAD-dependent histone deacetylase sir2 (sir2) of Schizosaccharomyces pombe (strain 972 / ATCC 24843) (Fission yeast).